The following is a 480-amino-acid chain: Probable WRKY transcription factor 61 (480 aa).

A disordered region spans residues 30–108 (NQLMAKHNEP…RNYDDNEKSS (79 aa)). 2 stretches are compositionally biased toward basic and acidic residues: residues 57–66 (REKVNEREEL) and 84–106 (NKEE…DNEK). Positions 185-251 (CETPTMNDGC…YEGTHNHPLP (67 aa)) form a DNA-binding region, WRKY.

It localises to the nucleus. Transcription factor. Interacts specifically with the W box (5'-(T)TGAC[CT]-3'), a frequently occurring elicitor-responsive cis-acting element. This Arabidopsis thaliana (Mouse-ear cress) protein is Probable WRKY transcription factor 61 (WRKY61).